The chain runs to 400 residues: Dual specificity mitogen-activated protein kinase kinase 2 (400 aa).

Residue M1 is modified to N-acetylmethionine. At S23 the chain carries Phosphoserine. Residues 72–369 (FERISELGAG…LKMLTNHTFI (298 aa)) enclose the Protein kinase domain. ATP is bound by residues 78–86 (LGAGNGGVV) and K101. D194 acts as the Proton acceptor in catalysis. (Microbial infection) O-acetylserine; by Yersinia YopJ; alternate occurs at positions 222 and 226. S222 bears the Phosphoserine; by RAF; alternate mark. At S226 the chain carries Phosphoserine; alternate. The tract at residues 286–310 (GEEGEPHSISPRPRPPGRPVSGHGM) is disordered. A phosphoserine mark is found at S293, S295, and S306. Residues T394 and T396 each carry the phosphothreonine modification.

It belongs to the protein kinase superfamily. STE Ser/Thr protein kinase family. MAP kinase kinase subfamily. Interacts with MORG1. Interacts with SGK1. Interacts with KSR1. Interacts with KSR1 and BRAF; the interaction with KSR1 mediates KSR1-BRAF dimerization. Interacts with GLS. The cofactor is Mg(2+). Post-translationally, MAPKK is itself dependent on Ser/Thr phosphorylation for activity catalyzed by MAP kinase kinase kinases (RAF or MEKK1). Phosphorylated by MAP2K1/MEK1. (Microbial infection) Acetylation of Ser-222 and Ser-226 by Yersinia YopJ prevents phosphorylation and activation, thus blocking the MAPK signaling pathway.

It is found in the cytoplasm. The protein resides in the membrane. The catalysed reaction is L-seryl-[protein] + ATP = O-phospho-L-seryl-[protein] + ADP + H(+). The enzyme catalyses L-threonyl-[protein] + ATP = O-phospho-L-threonyl-[protein] + ADP + H(+). It carries out the reaction L-tyrosyl-[protein] + ATP = O-phospho-L-tyrosyl-[protein] + ADP + H(+). Catalyzes the concomitant phosphorylation of a threonine and a tyrosine residue in a Thr-Glu-Tyr sequence located in MAP kinases. Activates the ERK1 and ERK2 MAP kinases. Activates BRAF in a KSR1 or KSR2-dependent manner; by binding to KSR1 or KSR2 releases the inhibitory intramolecular interaction between KSR1 or KSR2 protein kinase and N-terminal domains which promotes KSR1 or KSR2-BRAF dimerization and BRAF activation. This is Dual specificity mitogen-activated protein kinase kinase 2 (MAP2K2) from Homo sapiens (Human).